We begin with the raw amino-acid sequence, 296 residues long: tRNA dimethylallyltransferase (296 aa).

2 to 9 (GPTASGKT) provides a ligand contact to ATP. Position 4-9 (4-9 (TASGKT)) interacts with substrate. 3 interaction with substrate tRNA regions span residues 27 to 30 (DSAL), 151 to 155 (QRLSR), and 232 to 237 (RCVGYR).

Belongs to the IPP transferase family. In terms of assembly, monomer. The cofactor is Mg(2+).

It catalyses the reaction adenosine(37) in tRNA + dimethylallyl diphosphate = N(6)-dimethylallyladenosine(37) in tRNA + diphosphate. Functionally, catalyzes the transfer of a dimethylallyl group onto the adenine at position 37 in tRNAs that read codons beginning with uridine, leading to the formation of N6-(dimethylallyl)adenosine (i(6)A). This is tRNA dimethylallyltransferase from Shewanella frigidimarina (strain NCIMB 400).